Consider the following 317-residue polypeptide: Ribosomal lysine N-methyltransferase 5 (317 aa).

S-adenosyl-L-methionine is bound by residues Trp87, 141-143, Asp163, Trp214, and Leu237; that span reads GSG.

The protein belongs to the class I-like SAM-binding methyltransferase superfamily. RKM5 family.

In terms of biological role, S-adenosyl-L-methionine-dependent protein-lysine N-methyltransferase that methylates 60S ribosomal protein L1. The sequence is that of Ribosomal lysine N-methyltransferase 5 (RKM5) from Eremothecium gossypii (strain ATCC 10895 / CBS 109.51 / FGSC 9923 / NRRL Y-1056) (Yeast).